The following is a 639-amino-acid chain: Protein artemis (639 aa).

Disordered regions lie at residues 450–496, 515–570, and 590–617; these read MDCT…LTSS, SELE…SQVD, and EAAE…VPQP. Acidic residues predominate over residues 454–466; it reads ESNDDDDDEDDAA. A compositionally biased stretch (polar residues) spans 518-537; that stretch reads ENSQNTQTLSTENTASQSPE. The segment covering 548–560 has biased composition (low complexity); the sequence is VHMSSSQSTHISD.

This sequence belongs to the DNA repair metallo-beta-lactamase (DRMBL) family.

It localises to the nucleus. May have a role in the processing of DNA double strand breaks (DSBs) prior to their repair by the non homologous end joining (NHEJ) pathway. Probably exhibits both exonuclease and endonuclease activity. The sequence is that of Protein artemis (dclre1c) from Danio rerio (Zebrafish).